The following is a 429-amino-acid chain: Histidine--tRNA ligase (429 aa).

It belongs to the class-II aminoacyl-tRNA synthetase family. In terms of assembly, homodimer.

The protein localises to the cytoplasm. The enzyme catalyses tRNA(His) + L-histidine + ATP = L-histidyl-tRNA(His) + AMP + diphosphate + H(+). This Oceanobacillus iheyensis (strain DSM 14371 / CIP 107618 / JCM 11309 / KCTC 3954 / HTE831) protein is Histidine--tRNA ligase.